Reading from the N-terminus, the 478-residue chain is Zinc metalloproteinase/disintegrin VMP-II (478 aa).

Positions 1 to 20 (MIQVLLVTICLAVFPYQGSS) are cleaved as a signal peptide. The propeptide occupies 21 to 190 (IILESGNVND…KASQLNLTPE (170 aa)). One can recognise a Peptidase M12B domain in the interval 197–393 (RYIELVIVAD…HNPQCMLNEP (197 aa)). Residues Glu200 and Asp284 each contribute to the Ca(2+) site. 3 disulfide bridges follow: Cys308–Cys388, Cys348–Cys372, and Cys350–Cys355. His333 provides a ligand contact to Zn(2+). Residue Glu334 is part of the active site. Zn(2+)-binding residues include His337 and His343. Ca(2+)-binding residues include Cys388 and Asn391. The propeptide occupies 394 to 405 (LGTDTVSRNELL). The Disintegrin domain occupies 414-478 (GSPANPCCDA…ADCPRNRFHA (65 aa)). 4 cysteine pairs are disulfide-bonded: Cys420–Cys443, Cys434–Cys440, Cys439–Cys464, and Cys452–Cys471. Positions 456-458 (RGD) match the Cell attachment site motif.

Belongs to the venom metalloproteinase (M12B) family. P-II subfamily. P-IIe sub-subfamily. Heterodimer; disulfide-linked (disintegrin). The cofactor is Zn(2+). In terms of tissue distribution, expressed by the venom gland.

Its subcellular location is the secreted. Its function is as follows. Impairs hemostasis in the envenomed animal. In terms of biological role, this recombinant protein inhibits ADP-induced platelet aggregation in whole human blood and this effect is concentration-dependent with an IC(50) of 34 nM. In Crotalus viridis viridis (Prairie rattlesnake), this protein is Zinc metalloproteinase/disintegrin VMP-II.